Here is a 128-residue protein sequence, read N- to C-terminus: MALTQDELLAEFEGMTLIQLSEFVKAFEEKFDVTAAAAAPVVVAGGAAGGAAAEAEEEKDEFDVILTGAGDKKIQVIKVVRELTSLGLKEAKDLVDGTPKPVLEKVNKEAADKAAEALKGAGASVEVK.

This sequence belongs to the bacterial ribosomal protein bL12 family. Homodimer. Part of the ribosomal stalk of the 50S ribosomal subunit. Forms a multimeric L10(L12)X complex, where L10 forms an elongated spine to which 2 to 4 L12 dimers bind in a sequential fashion. Binds GTP-bound translation factors.

In terms of biological role, forms part of the ribosomal stalk which helps the ribosome interact with GTP-bound translation factors. Is thus essential for accurate translation. This chain is Large ribosomal subunit protein bL12, found in Streptomyces antibioticus.